Consider the following 330-residue polypeptide: tRNA-modifying protein YgfZ (330 aa).

Residues Trp-28 and Trp-190 each contribute to the folate site.

This sequence belongs to the tRNA-modifying YgfZ family.

The protein resides in the cytoplasm. Functionally, folate-binding protein involved in regulating the level of ATP-DnaA and in the modification of some tRNAs. It is probably a key factor in regulatory networks that act via tRNA modification, such as initiation of chromosomal replication. This Yersinia pestis bv. Antiqua (strain Antiqua) protein is tRNA-modifying protein YgfZ.